The following is a 434-amino-acid chain: Tryptophan synthase beta chain 2 (434 aa).

Position 110 is an N6-(pyridoxal phosphate)lysine (K110).

It belongs to the TrpB family. In terms of assembly, tetramer of two alpha and two beta chains. The cofactor is pyridoxal 5'-phosphate.

It carries out the reaction (1S,2R)-1-C-(indol-3-yl)glycerol 3-phosphate + L-serine = D-glyceraldehyde 3-phosphate + L-tryptophan + H2O. It functions in the pathway amino-acid biosynthesis; L-tryptophan biosynthesis; L-tryptophan from chorismate: step 5/5. Its function is as follows. The beta subunit is responsible for the synthesis of L-tryptophan from indole and L-serine. This is Tryptophan synthase beta chain 2 (trpB2) from Aquifex aeolicus (strain VF5).